Consider the following 455-residue polypeptide: L-serine dehydratase (455 aa).

It belongs to the iron-sulfur dependent L-serine dehydratase family. [4Fe-4S] cluster is required as a cofactor.

It catalyses the reaction L-serine = pyruvate + NH4(+). It participates in carbohydrate biosynthesis; gluconeogenesis. The chain is L-serine dehydratase (sdaA) from Haemophilus influenzae (strain ATCC 51907 / DSM 11121 / KW20 / Rd).